The following is a 213-amino-acid chain: ATP-dependent Clp protease proteolytic subunit (213 aa).

Residue serine 114 is the Nucleophile of the active site. Histidine 139 is an active-site residue.

It belongs to the peptidase S14 family. As to quaternary structure, fourteen ClpP subunits assemble into 2 heptameric rings which stack back to back to give a disk-like structure with a central cavity, resembling the structure of eukaryotic proteasomes.

The protein resides in the cytoplasm. It carries out the reaction Hydrolysis of proteins to small peptides in the presence of ATP and magnesium. alpha-casein is the usual test substrate. In the absence of ATP, only oligopeptides shorter than five residues are hydrolyzed (such as succinyl-Leu-Tyr-|-NHMec, and Leu-Tyr-Leu-|-Tyr-Trp, in which cleavage of the -Tyr-|-Leu- and -Tyr-|-Trp bonds also occurs).. Functionally, cleaves peptides in various proteins in a process that requires ATP hydrolysis. Has a chymotrypsin-like activity. Plays a major role in the degradation of misfolded proteins. This is ATP-dependent Clp protease proteolytic subunit from Pseudomonas putida (strain ATCC 47054 / DSM 6125 / CFBP 8728 / NCIMB 11950 / KT2440).